Reading from the N-terminus, the 101-residue chain is Small ribosomal subunit protein uS14 (101 aa).

It belongs to the universal ribosomal protein uS14 family. As to quaternary structure, part of the 30S ribosomal subunit. Contacts proteins S3 and S10.

In terms of biological role, binds 16S rRNA, required for the assembly of 30S particles and may also be responsible for determining the conformation of the 16S rRNA at the A site. The protein is Small ribosomal subunit protein uS14 of Anaplasma phagocytophilum (strain HZ).